The primary structure comprises 336 residues: Glyceraldehyde-3-phosphate dehydrogenase (336 aa).

Residues 12 to 13, Asp-34, Arg-78, and Thr-121 each bind NAD(+); that span reads RI. Residues 151-153, Thr-182, Arg-199, 212-213, and Arg-235 each bind D-glyceraldehyde 3-phosphate; these read SCT and TG. Cys-152 (nucleophile) is an active-site residue. Residue Asn-316 coordinates NAD(+).

This sequence belongs to the glyceraldehyde-3-phosphate dehydrogenase family. As to quaternary structure, homotetramer.

It is found in the cytoplasm. It carries out the reaction D-glyceraldehyde 3-phosphate + phosphate + NAD(+) = (2R)-3-phospho-glyceroyl phosphate + NADH + H(+). Its pathway is carbohydrate degradation; glycolysis; pyruvate from D-glyceraldehyde 3-phosphate: step 1/5. Its function is as follows. Also binds human plasminogen. Catalyzes the oxidative phosphorylation of glyceraldehyde 3-phosphate (G3P) to 1,3-bisphosphoglycerate (BPG) using the cofactor NAD. The first reaction step involves the formation of a hemiacetal intermediate between G3P and a cysteine residue, and this hemiacetal intermediate is then oxidized to a thioester, with concomitant reduction of NAD to NADH. The reduced NADH is then exchanged with the second NAD, and the thioester is attacked by a nucleophilic inorganic phosphate to produce BPG. This Streptococcus pyogenes protein is Glyceraldehyde-3-phosphate dehydrogenase (gap).